The chain runs to 204 residues: Small ribosomal subunit protein uS4 (204 aa).

The tract at residues 1–49 (MSKRKSAKYKLDRRMGENIWGRPNSPVNKRSYGPGQHGQRRKGKTSDFG) is disordered. The 61-residue stretch at 94–154 (QRLDMVVYRA…NKAKEMALVI (61 aa)) folds into the S4 RNA-binding domain.

It belongs to the universal ribosomal protein uS4 family. In terms of assembly, part of the 30S ribosomal subunit. Contacts protein S5. The interaction surface between S4 and S5 is involved in control of translational fidelity.

One of the primary rRNA binding proteins, it binds directly to 16S rRNA where it nucleates assembly of the body of the 30S subunit. In terms of biological role, with S5 and S12 plays an important role in translational accuracy. This is Small ribosomal subunit protein uS4 from Erythrobacter litoralis (strain HTCC2594).